The following is a 110-amino-acid chain: MHLSSVQFAWAALVALAVSAAGALPSSAPHHVERRSFFTLECKGVFDAAIFARLDRICDDCFNLFREPQLYTLCRAECFTTPYFKGCMESLYLYDEKEQIDQMIDFVGKR.

An N-terminal signal peptide occupies residues M1 to A23. Positions L24–R35 are excised as a propeptide. 3 cysteine pairs are disulfide-bonded: C42–C78, C58–C74, and C61–C87. At V107 the chain carries Valine amide.

It belongs to the arthropod CHH/MIH/GIH/VIH hormone family.

Its subcellular location is the secreted. The polypeptide is CHH-like protein (CHHL) (Bombyx mori (Silk moth)).